Here is a 462-residue protein sequence, read N- to C-terminus: Probable Xaa-Pro aminopeptidase NECHADRAFT_60613 (462 aa).

D259, D270, E393, and E433 together coordinate Mn(2+).

Belongs to the peptidase M24B family. It depends on Mn(2+) as a cofactor.

The catalysed reaction is Release of any N-terminal amino acid, including proline, that is linked to proline, even from a dipeptide or tripeptide.. In terms of biological role, catalyzes the removal of a penultimate prolyl residue from the N-termini of peptides. In Fusarium vanettenii (strain ATCC MYA-4622 / CBS 123669 / FGSC 9596 / NRRL 45880 / 77-13-4) (Fusarium solani subsp. pisi), this protein is Probable Xaa-Pro aminopeptidase NECHADRAFT_60613.